The sequence spans 316 residues: MNMLKTTMLLAALTALFMALGFTIGGTGGAMIALVVAAGMNLFTFWNADSIVLRMHGAREVDAQNCPEFVGLVAGLARRANLPMPRVYIIDSEHPNAFATGRNPENAAVAATTGLLAILNRDEIEGVMAHELAHVRNRDTLIMTMTATIAGAISMLANFGMFFGAGRRDGGQVLATILAVFVAPFAAMIVQMAISRAREYGADRGGAEISGKPQALASALAKLANGAARIPNPVVERNPAAAALYIVPGMKRDGDSLFATHPATENRIAHLEAIANEMGVSSPSPNFAALSERRGSVSSVPRTRRRSSALDPNGRG.

A helical membrane pass occupies residues 16 to 36 (LFMALGFTIGGTGGAMIALVV). H130 provides a ligand contact to Zn(2+). Residue E131 is part of the active site. H134 serves as a coordination point for Zn(2+). 2 helical membrane passes run 145-165 (MTAT…FFGA) and 174-194 (LATI…QMAI). Zn(2+) is bound at residue E199. Residues 285–316 (PNFAALSERRGSVSSVPRTRRRSSALDPNGRG) form a disordered region.

Belongs to the peptidase M48B family. It depends on Zn(2+) as a cofactor.

The protein resides in the cell inner membrane. This Rhizorhabdus wittichii (strain DSM 6014 / CCUG 31198 / JCM 15750 / NBRC 105917 / EY 4224 / RW1) (Sphingomonas wittichii) protein is Protease HtpX homolog.